The following is a 286-amino-acid chain: ATP synthase gamma chain (286 aa).

It belongs to the ATPase gamma chain family. In terms of assembly, F-type ATPases have 2 components, CF(1) - the catalytic core - and CF(0) - the membrane proton channel. CF(1) has five subunits: alpha(3), beta(3), gamma(1), delta(1), epsilon(1). CF(0) has three main subunits: a, b and c.

The protein localises to the cell membrane. Produces ATP from ADP in the presence of a proton gradient across the membrane. The gamma chain is believed to be important in regulating ATPase activity and the flow of protons through the CF(0) complex. In Ureaplasma parvum serovar 3 (strain ATCC 27815 / 27 / NCTC 11736), this protein is ATP synthase gamma chain.